A 242-amino-acid polypeptide reads, in one-letter code: Ribonuclease PH (242 aa).

Phosphate contacts are provided by residues arginine 89 and 127-129; that span reads GTR.

The protein belongs to the RNase PH family. Homohexameric ring arranged as a trimer of dimers.

It catalyses the reaction tRNA(n+1) + phosphate = tRNA(n) + a ribonucleoside 5'-diphosphate. Functionally, phosphorolytic 3'-5' exoribonuclease that plays an important role in tRNA 3'-end maturation. Removes nucleotide residues following the 3'-CCA terminus of tRNAs; can also add nucleotides to the ends of RNA molecules by using nucleoside diphosphates as substrates, but this may not be physiologically important. Probably plays a role in initiation of 16S rRNA degradation (leading to ribosome degradation) during starvation. The sequence is that of Ribonuclease PH from Neisseria meningitidis serogroup A / serotype 4A (strain DSM 15465 / Z2491).